A 649-amino-acid chain; its full sequence is Glycerol-3-phosphate dehydrogenase, mitochondrial (649 aa).

FAD is bound at residue 69–97; sequence DVLIIGGGATGTGCALDAATRGLNVALVE.

Belongs to the FAD-dependent glycerol-3-phosphate dehydrogenase family. It depends on FAD as a cofactor.

Its subcellular location is the mitochondrion inner membrane. It localises to the mitochondrion intermembrane space. It catalyses the reaction a quinone + sn-glycerol 3-phosphate = dihydroxyacetone phosphate + a quinol. It functions in the pathway polyol metabolism; glycerol degradation via glycerol kinase pathway; glycerone phosphate from sn-glycerol 3-phosphate (anaerobic route): step 1/1. This is Glycerol-3-phosphate dehydrogenase, mitochondrial (GUT2) from Saccharomyces cerevisiae (strain ATCC 204508 / S288c) (Baker's yeast).